A 509-amino-acid polypeptide reads, in one-letter code: Taxoid 14-beta-hydroxylase (509 aa).

The next 3 helical transmembrane spans lie at 20–40 (AILF…LLFL), 186–206 (SVVA…FFNI), and 218–238 (LLEI…GFAY). Heme is bound at residue C443.

The protein belongs to the cytochrome P450 family.

It localises to the microsome membrane. The catalysed reaction is 10beta-hydroxytaxa-4(20),11-dien-5alpha-yl acetate + NADPH + O2 + H(+) = 10beta,14beta-dihydroxytaxa-4(20),11-dien-5alpha-yl acetate + NADP(+) + H2O. Its pathway is alkaloid biosynthesis; taxol biosynthesis. Its function is as follows. Catalyzes the conversion of 5-alpha-acetoxy-10beta-ol to 5-alpha-acetoxy-10beta,14beta-dihydroxy taxadiene. Also acts on taxa-4(20),11-dien-5-alpha-yl acetate. This Taxus cuspidata (Japanese yew) protein is Taxoid 14-beta-hydroxylase.